A 1023-amino-acid chain; its full sequence is DNA polymerase (1023 aa).

The disordered stretch occupies residues 726–751 (QTDATRKHRQCTPTSNSSSDEDAPFY).

This sequence belongs to the DNA polymerase type-B family. As to quaternary structure, heterodimer with the terminal protein; this heterodimer binds to bp 9 to 18 of the genome. Forms a complex with viral pTP, DBP and hosts NFIA and POU2F1/OCT1 for initiation of replication.

The protein localises to the host nucleus. The catalysed reaction is DNA(n) + a 2'-deoxyribonucleoside 5'-triphosphate = DNA(n+1) + diphosphate. Its function is as follows. Eukaryotic-type DNA polymerase involved in viral genomic replication. DNA synthesis is protein primed, and acts in a strand displacement replication. Assembles in complex with viral pTP, DBP, host NFIA and host POU2F1/OCT1 on viral origin of replication. The polymerase covalently transfers dCMP onto pTP, thereby initiating complementary strand synthesis. This is DNA polymerase from Bovine adenovirus B serotype 3 (BAdV-3).